A 217-amino-acid polypeptide reads, in one-letter code: Small ribosomal subunit protein uS3c (217 aa).

One can recognise a KH type-2 domain in the interval 39-109; that stretch reads IRSCIEKQLH…QIRINLIEIT (71 aa).

It belongs to the universal ribosomal protein uS3 family. As to quaternary structure, part of the 30S ribosomal subunit.

The protein resides in the plastid. The protein localises to the chloroplast. In Gracilaria tenuistipitata var. liui (Red alga), this protein is Small ribosomal subunit protein uS3c (rps3).